A 391-amino-acid polypeptide reads, in one-letter code: mRNA-capping enzyme subunit alpha (391 aa).

Lys-63 serves as the catalytic N6-GMP-lysine intermediate. Residues 363–391 are disordered; that stretch reads KERNRRPRDEDRKRVGGDDHDHGAKRARQ.

It belongs to the eukaryotic GTase family. As to quaternary structure, heterodimer. The mRNA-capping enzyme is composed of two separate chains alpha and beta, respectively a mRNA guanylyltransferase and an mRNA 5'-triphosphate monophosphatase.

It is found in the nucleus. The catalysed reaction is a 5'-end diphospho-ribonucleoside in mRNA + GTP + H(+) = a 5'-end (5'-triphosphoguanosine)-ribonucleoside in mRNA + diphosphate. Second step of mRNA capping. Transfer of the GMP moiety of GTP to the 5'-end of RNA via an enzyme-GMP covalent reaction intermediate. The sequence is that of mRNA-capping enzyme subunit alpha (CEG1) from Yarrowia lipolytica (strain CLIB 122 / E 150) (Yeast).